We begin with the raw amino-acid sequence, 692 residues long: MARKTPLNRIRNIGIAAHIDAGKTTTSERILFYTGVSHKIGEVHDGAATMDWMEQEKERGITITSAATTCFWKDHQINLIDTPGHVDFTIEVERSMRVLDGAVSVFCSVGGVQPQSETVWRQANKYGVPRIVFVNKMDRIGANFYNVENQIKLRLKANPVPINIPIGTEDTFIGVIDLVQMKAIVWNNETMGAKYDVEEIPSDLLEKAKQYREKLVEAVAEQDEALMEKYLGGEELSVEEIKKGIKTGCLNMSLVPMLCGSSFKNKGVQTLLDAVIDYLPAPTEVVDIKGIDPKTEEEVFVKSSDDGEFAGLAFKIMTDPFVGQLTFVRVYRGKLESGSYVYNSTKDKKERVGRLLKMHSNKREDIKEVYAGEICAFVGLKDTLTGDTLCDEKNAIVLERMEFPEPVIHIAVEPKTKADQEKMGVALGKLAEEDPSFRVMTQEETGQTLIGGMGELHLEIIVDRLKREFKVEAEIGQPQVAFRETIRSSVSKEHKYAKQSGGRGQYGHVFIKLEPKEPGSGYEFVNEISGGVIPKEYIPAVDKGIQEAMQNGVLAGYPVVDFKVTLYDGSYHDVDSSEMAFKIAGSMAFKEASRAANPVLLEPMMKVEVEVPEEYMGDVIGDLNRRRGQINSMDDRLGLKIVNAFVPLVEMFGYSTDLRSATQGRGTYSMEFDHYGEVPSNIAKEIVEKRKG.

Positions Asn-8–Thr-283 constitute a tr-type G domain. GTP-binding positions include Ala-17 to Thr-24, Asp-81 to His-85, and Asn-135 to Asp-138.

This sequence belongs to the TRAFAC class translation factor GTPase superfamily. Classic translation factor GTPase family. EF-G/EF-2 subfamily.

Its subcellular location is the cytoplasm. Catalyzes the GTP-dependent ribosomal translocation step during translation elongation. During this step, the ribosome changes from the pre-translocational (PRE) to the post-translocational (POST) state as the newly formed A-site-bound peptidyl-tRNA and P-site-bound deacylated tRNA move to the P and E sites, respectively. Catalyzes the coordinated movement of the two tRNA molecules, the mRNA and conformational changes in the ribosome. The chain is Elongation factor G from Helicobacter pylori (strain G27).